A 721-amino-acid polypeptide reads, in one-letter code: Transcription activator of gluconeogenesis ARB_05058 (721 aa).

Residues 1-34 (MSPHQTTGQESDNMTVNGENAQASSQYIQSNEEM) show a composition bias toward polar residues. Residues 1 to 62 (MSPHQTTGQE…PSRPKRKKAK (62 aa)) form a disordered region. The segment covering 40–55 (TEKKASTAKAAKDPSR) has biased composition (basic and acidic residues). Positions 65 to 93 (CYACQRGHLTCGDERPCQRCIKRGFQDAC) form a DNA-binding region, zn(2)-C6 fungal-type. 5 disordered regions span residues 128–224 (QNNA…FNSA), 263–300 (GDTPPSESGAQRGSIGQNGSGTFGLTGSNFSESPSNQA), 353–400 (SPAS…TPQL), 533–567 (NHNVNTGGSSGLMTGSTSRGSYTPRPYSSEVYNSS), and 635–666 (GLNGEAASNETNELNGSLTNGATTNGRGQRRW). Polar residues-rich tracts occupy residues 133–213 (GSNT…TPSA), 267–277 (PSESGAQRGSI), 287–300 (LTGSNFSESPSNQA), and 361–379 (MMTTSSATFEDTTNSGAFN). 2 stretches are compositionally biased toward low complexity: residues 380–399 (SRQNVPVSQQRQQPVVSTPQ) and 543–553 (GLMTGSTSRGS). Positions 640 to 661 (AASNETNELNGSLTNGATTNGR) are enriched in polar residues.

It belongs to the ERT1/acuK family.

Its subcellular location is the nucleus. In terms of biological role, transcription factor which regulates nonfermentable carbon utilization. Activator of gluconeogenetic genes. This chain is Transcription activator of gluconeogenesis ARB_05058, found in Arthroderma benhamiae (strain ATCC MYA-4681 / CBS 112371) (Trichophyton mentagrophytes).